Here is a 266-residue protein sequence, read N- to C-terminus: Ciliary microtubule inner protein 4 (266 aa).

Polar residues-rich tracts occupy residues 1 to 15 (MELS…LTRT) and 24 to 38 (QDMN…SLDN). The disordered stretch occupies residues 1–124 (MELSHRQGTT…SPEQRTVPLS (124 aa)). Low complexity predominate over residues 47–63 (LSQSPLGSSLGQGYLET). The segment covering 81–102 (HPEDLKKGASRSSSRDARETFR) has biased composition (basic and acidic residues).

As to expression, only detected in testis, in the spermatids and sperm within the seminiferous tubules (at protein level).

It is found in the cytoplasmic vesicle. Its subcellular location is the secretory vesicle. The protein localises to the acrosome. The protein resides in the cell projection. It localises to the cilium. It is found in the flagellum. Its function is as follows. Seems to be associated with spermiogenesis but is not essential for sperm development and male fertility. This Mus musculus (Mouse) protein is Ciliary microtubule inner protein 4 (Cimip4).